The sequence spans 82 residues: Chaperone protein DnaJ 1 (82 aa).

A disordered region spans residues 1 to 33; sequence YHLGGPPVTLKLPPGTPAGRTMRARGKGAVRKD.

This sequence belongs to the DnaJ family. As to quaternary structure, homodimer. It depends on Zn(2+) as a cofactor.

It is found in the cytoplasm. Functionally, participates actively in the response to hyperosmotic and heat shock by preventing the aggregation of stress-denatured proteins and by disaggregating proteins, also in an autonomous, DnaK-independent fashion. Unfolded proteins bind initially to DnaJ; upon interaction with the DnaJ-bound protein, DnaK hydrolyzes its bound ATP, resulting in the formation of a stable complex. GrpE releases ADP from DnaK; ATP binding to DnaK triggers the release of the substrate protein, thus completing the reaction cycle. Several rounds of ATP-dependent interactions between DnaJ, DnaK and GrpE are required for fully efficient folding. Also involved, together with DnaK and GrpE, in the DNA replication of plasmids through activation of initiation proteins. The sequence is that of Chaperone protein DnaJ 1 (dnaJ1) from Streptomyces albus G.